A 318-amino-acid chain; its full sequence is MSLPIIVKWGGQEYSVTTLSEDDTVLDLKQFLKTLTGVLPERQKLLGLKVKGKPAENDVKLGALKLKPNTKIMMMGTREESLEDVLCPPPDNDDVINDFDIEDEVVEVENREENLLKISRRVKEYKVEVLNPPREGKKLLVLDVDYTLFDHRSCAETGVELMRPYLHEFLTSAYEDYDIVIWSATNMKWIEAKMKELGVSTNANYKITFMLDSAAMITVHTPRRGLIDVKPLGVIWGKFSEFYSKKNTIMFDDIGRNFLMNPQNGLKIRPFMKAHLNRDKDKELVKLTQYLKEIAKLDDFLELNHKYWERYLSKKQGQ.

Positions 3-81 (LPIIVKWGGQ…IMMMGTREES (79 aa)) constitute a Ubiquitin-like domain. Lys-117 carries the post-translational modification N6-acetyllysine. In terms of domain architecture, FCP1 homology spans 133-294 (PREGKKLLVL…VKLTQYLKEI (162 aa)). Positions 143, 145, and 253 each coordinate Mg(2+).

It depends on Mg(2+) as a cofactor.

The protein localises to the nucleus. The enzyme catalyses O-phospho-L-seryl-[protein] + H2O = L-seryl-[protein] + phosphate. The catalysed reaction is O-phospho-L-threonyl-[protein] + H2O = L-threonyl-[protein] + phosphate. Dephosphorylates 26S nuclear proteasomes, thereby decreasing their proteolytic activity. Recruited to the 19S regulatory particle of the 26S proteasome through its interaction with 19S component PSMD2/RPN1. Once recruited, dephosphorylates 19S component PSMC2/RPT1 which impairs PSMC2 ATPase activity and disrupts 26S proteasome assembly. Has also been reported to stimulate the proteolytic activity of the 26S proteasome. This chain is Ubiquitin-like domain-containing CTD phosphatase 1 (Ublcp1), found in Rattus norvegicus (Rat).